The sequence spans 381 residues: CCN family member 1 (381 aa).

Positions 1-24 (MSSRIARALALVVTLLHLTRLALS) are cleaved as a signal peptide. The IGFBP N-terminal domain maps to 25–94 (TCPAACHCPL…TALKGICRAQ (70 aa)). 6 disulfide bridges follow: C26–C50, C30–C52, C32–C53, C39–C56, C64–C78, and C70–C91. The 67-residue stretch at 98 to 164 (RPCEYNSRIY…GQCCEEWVCD (67 aa)) folds into the VWFC domain. S188 bears the Phosphoserine mark. Residues 228 to 273 (KCIVQTTSWSQCSKTCGTGISTRVTNDNPECRLVKETRICEVRPCG) enclose the TSP type-1 domain. Residues 279–315 (SLKKGKKCSKTKKSPEPVRFTYAGCLSVKKYRPKYCG) form a heparin-binding region. Intrachain disulfides connect C286–C323, C303–C337, C314–C353, C317–C355, and C322–C359. In terms of domain architecture, CTCK spans 286 to 360 (CSKTKKSPEP…QSCKCNYNCP (75 aa)).

It belongs to the CCN family. Interaction with integrins is heparin- and cell-type-dependent and promotes cell adhesion.

The protein localises to the secreted. Promotes cell proliferation, chemotaxis, angiogenesis and cell adhesion. Appears to play a role in wound healing by up-regulating, in skin fibroblasts, the expression of a number of genes involved in angiogenesis, inflammation and matrix remodeling including VEGA-A, VEGA-C, MMP1, MMP3, TIMP1, uPA, PAI-1 and integrins alpha-3 and alpha-5. CCN1-mediated gene regulation is dependent on heparin-binding. Down-regulates the expression of alpha-1 and alpha-2 subunits of collagen type-1. Promotes cell adhesion and adhesive signaling through integrin alpha-6/beta-1, cell migration through integrin alpha-1/beta-5 and cell proliferation through integrin alpha-v/beta-3. This Pan troglodytes (Chimpanzee) protein is CCN family member 1 (CCN1).